The primary structure comprises 102 residues: Crustacean hyperglycemic hormones 3 (102 aa).

A signal peptide spans 1–22 (MIALRLIAVTLVVAMAASTTWA). Intrachain disulfides connect C35–C71, C51–C67, and C54–C80. V100 is modified (valine amide).

Belongs to the arthropod CHH/MIH/GIH/VIH hormone family.

It is found in the secreted. Hormone found in the sinus gland of isopods and decapods which controls the blood sugar level. Has a secretagogue action over the amylase released from the midgut gland. May act as a stress hormone and may be involved in the control of molting and reproduction. The polypeptide is Crustacean hyperglycemic hormones 3 (CHH3) (Penaeus monodon (Giant tiger prawn)).